Here is a 358-residue protein sequence, read N- to C-terminus: 3-O-methylredipecamine 2-O-methyltransferase IpeOMT3 (358 aa).

Gly-193, Asp-216, Asp-236, Met-237, and Lys-250 together coordinate S-adenosyl-L-methionine. His-254 functions as the Proton acceptor in the catalytic mechanism.

Belongs to the class I-like SAM-binding methyltransferase superfamily. Cation-independent O-methyltransferase family. In terms of tissue distribution, expressed in roots.

It localises to the cytoplasm. The protein localises to the cytosol. The catalysed reaction is (S)-reticuline + S-adenosyl-L-methionine = (S)-laudanine + S-adenosyl-L-homocysteine + H(+). The protein operates within alkaloid biosynthesis. O-methyltransferase involved in the biosynthesis of ipecac and benzylisoquinoline monoterpenoid-isoquinoline alkaloids natural products, starting by the condensation of dopamine and secologanin, and including emetine and cephaeline, drugs used both as anti-protozoal (e.g. treatment of ameobiasis) and as emetic agents. Catalyzes 2-O-methylation of 3-O-methylredipecamine and, with less efficiency, the 7-O-methylation of (S)-coclaurine, (R,S)-N-methylcoclaurine, (R,S)-4'-O-methylcoclaurine, (R,S)-6-O-methyllaudanosoline, nororientaline, (S)-norreticuline and (S)-reticuline. This chain is 3-O-methylredipecamine 2-O-methyltransferase IpeOMT3, found in Carapichea ipecacuanha (Ipecac).